Here is a 222-residue protein sequence, read N- to C-terminus: Niacin transporter NiaX (222 aa).

5 helical membrane passes run 34 to 54 (NLII…MMPV), 72 to 94 (MAAM…LGFM), 101 to 120 (TIWL…AYVL), 135 to 155 (IFNF…VYAF), and 167 to 187 (ALLN…MIDF).

It belongs to the vitamin uptake transporter (VUT/ECF) (TC 2.A.88) family. In L.lactis forms a stable complex with EcfA, EcfA' and EcfT. In E.coli forms a stable energy-coupling factor (ECF) transporter complex composed of 2 membrane-embedded substrate-binding proteins (S component), 2 ATP-binding proteins (A and A' components) and 2 transmembrane proteins (T component), probably with a stoichiometry of 2:1:1:2. May be able to interact with more than 1 S component at a time.

The protein resides in the cell membrane. In terms of biological role, probably a niacin-binding protein that interacts with the energy-coupling factor (ECF) ABC-transporter complex. Unlike classic ABC transporters this ECF transporter provides the energy necessary to transport a number of different substrates. The substrates themselves are bound by transmembrane, not extracytoplasmic soluble proteins. Uptake of niacin into proteosomes containing EcfA1A2T and Niax has been demonstrated. Uptake requires hydrolyzable Mg-ATP and is substrate-specific; NiaX-containing proteosomes did not transport riboflavin. This is Niacin transporter NiaX (niaX) from Lactococcus lactis subsp. cremoris (strain MG1363).